The chain runs to 81 residues: Toxin-like peptide AaF1CA5 (81 aa).

The N-terminal stretch at 1 to 22 (MMKLMLFSIIVILFSLIGSIHG) is a signal peptide. The LCN-type CS-alpha/beta domain occupies 25–81 (VPGNYPLDSSDDTYLCAPLGENPFCIKICRKHGVKYGLMLRLPCWCEYFGKIKNVKI). Disulfide bonds link cysteine 49/cysteine 68 and cysteine 53/cysteine 70.

The protein belongs to the long (3 C-C) scorpion toxin superfamily. As to expression, expressed by the venom gland.

The protein resides in the secreted. In terms of biological role, probable neurotoxin that inhibits ion channels. This chain is Toxin-like peptide AaF1CA5, found in Androctonus australis (Sahara scorpion).